Consider the following 146-residue polypeptide: Large ribosomal subunit protein uL15 (146 aa).

Positions 1–13 are enriched in basic and acidic residues; that stretch reads MKLHELRPAEGSK. The interval 1–54 is disordered; that stretch reads MKLHELRPAEGSKKAPKRVGRGNGSGLGKTAGKGHKGQNARSGGGVRPGFEGGQ. Composition is skewed to gly residues over residues 21–31 and 42–52; these read RGNGSGLGKTA and SGGGVRPGFEG.

Belongs to the universal ribosomal protein uL15 family. In terms of assembly, part of the 50S ribosomal subunit.

Binds to the 23S rRNA. This chain is Large ribosomal subunit protein uL15, found in Clostridium novyi (strain NT).